A 224-amino-acid chain; its full sequence is Response regulator protein GraR (224 aa).

The region spanning 2 to 115 is the Response regulatory domain; sequence QILLVEDDNT…VLIAKLQAIY (114 aa). Residue D51 is modified to 4-aspartylphosphate. A DNA-binding region (ompR/PhoB-type) is located at residues 126-224; the sequence is KRTLTWQDAV…KVGKGYMAHE (99 aa). 3 positions are modified to phosphothreonine: T128, T130, and T149.

As to quaternary structure, interacts with GraX. In terms of processing, phosphorylated by GraS. Phosphorylated by Stk1; phosphorylation increases the DNA-binding activity of GraR.

It is found in the cytoplasm. Its function is as follows. Member of the two-component regulatory system GraR/GraS involved in resistance against cationic antimicrobial peptides (CAMPs). Upon phosphorylation by GraS, functions as a transcription regulator by direct binding to promoter regions of target genes such as adhesins, exoproteins, transporters, toxins, and proteins involved in cell wall synthesis. Down-regulates the expression of many genes involved in RNA and amino acid synthesis or glycolysis. The protein is Response regulator protein GraR (graR) of Staphylococcus aureus (strain USA300).